The sequence spans 433 residues: 26S proteasome regulatory subunit 7 (433 aa).

Residues 1-22 are disordered; that stretch reads MPDYLGADQRKTKEDEKDDKPI. The segment covering 8–22 has biased composition (basic and acidic residues); the sequence is DQRKTKEDEKDDKPI. Position 116 is an N6-acetyllysine (lysine 116). 216-223 contributes to the ATP binding site; it reads GPPGTGKT. Lysine 422 carries the N6-acetyllysine modification.

This sequence belongs to the AAA ATPase family. Component of the 19S proteasome regulatory particle complex. The 26S proteasome consists of a 20S core particle (CP) and two 19S regulatory subunits (RP). The regulatory particle is made of a lid composed of 9 subunits, a base containing 6 ATPases including PSMC2 and few additional components. Interacts with NDC80/HEC; this interaction is detected only during M phase. Interacts and SQSTM1. Interacts with PAAF1. Directly interacts with TRIM5. In terms of processing, monoubiquitinated by RNF181. Phosphorylated. Dephosphorylated by UBLCP1 which impairs PSMC2 ATPase activity and disrupts 26S proteasome assembly.

It is found in the cytoplasm. The protein resides in the nucleus. Component of the 26S proteasome, a multiprotein complex involved in the ATP-dependent degradation of ubiquitinated proteins. This complex plays a key role in the maintenance of protein homeostasis by removing misfolded or damaged proteins, which could impair cellular functions, and by removing proteins whose functions are no longer required. Therefore, the proteasome participates in numerous cellular processes, including cell cycle progression, apoptosis, or DNA damage repair. PSMC2 belongs to the heterohexameric ring of AAA (ATPases associated with diverse cellular activities) proteins that unfolds ubiquitinated target proteins that are concurrently translocated into a proteolytic chamber and degraded into peptides. The polypeptide is 26S proteasome regulatory subunit 7 (PSMC2) (Pongo abelii (Sumatran orangutan)).